The following is a 331-amino-acid chain: L-lactate dehydrogenase A chain (331 aa).

NAD(+)-binding positions include 29 to 57 and R98; that span reads GMVGMASAISILLKDLCDELAMVDVMEDK. Substrate is bound by residues R105, N137, and R168. N137 contributes to the NAD(+) binding site. The Proton acceptor role is filled by H192. T247 serves as a coordination point for substrate.

Belongs to the LDH/MDH superfamily. LDH family. As to quaternary structure, homotetramer.

It is found in the cytoplasm. It catalyses the reaction (S)-lactate + NAD(+) = pyruvate + NADH + H(+). It functions in the pathway fermentation; pyruvate fermentation to lactate; (S)-lactate from pyruvate: step 1/1. In terms of biological role, interconverts simultaneously and stereospecifically pyruvate and lactate with concomitant interconversion of NADH and NAD(+). In Chaenocephalus aceratus (Blackfin icefish), this protein is L-lactate dehydrogenase A chain (ldha).